Reading from the N-terminus, the 7094-residue chain is Replicase polyprotein 1ab (7094 aa).

Residues 54-196 form the CoV Nsp1 globular domain; that stretch reads PENHVMVDCR…PWVMYLRKCG (143 aa). A BetaCoV Nsp1 C-terminal domain is found at 216 to 246; that stretch reads FKVEDAYDLVHDEPKGKFSKKAYALIRGYRG. The 270-residue stretch at 250 to 519 folds into the CoV Nsp2 N-terminal domain; it reads LLYVDQYGCD…LICKALYLDY (270 aa). The Zn(2+) site is built by C392, C397, C413, and C416. Residues 392–416 are C4; sequence CEQDLCDFKGWVPGNMIDGFACTTC. Positions 524-713 constitute a CoV Nsp2 middle domain; that stretch reads CGNLHQRELL…AQAFRSVAKV (190 aa). The 119-residue stretch at 733–851 folds into the CoV Nsp2 C-terminal domain; that stretch reads RRRICLSGSK…LDQAWRVPCA (119 aa). The 114-residue stretch at 853 to 966 folds into the Ubiquitin-like 1 domain; the sequence is RRVTFKEQPT…LYCAFTAPED (114 aa). The Peptidase C16 1 domain occupies 1036–1274; sequence DLESVIQDYE…IAQLYGSCIT (239 aa). C1074 serves as the catalytic For PL1-PRO activity. Residues C1151, C1154, C1177, and C1179 each coordinate Zn(2+). The C4-type 1 zinc-finger motif lies at 1151–1179; it reads CIKCDLALKLKGLDAMFFYGDVVSHVCKC. Residues H1225 and D1236 each act as for PL1-PRO activity in the active site. Positions 1275–1435 constitute a Macro domain; that stretch reads PNVCFVKGDI…LISKCQITAV (161 aa). A DPUP domain is found at 1491-1563; the sequence is DDARTFVQSN…VAQIKALFLD (73 aa). Positions 1562-1617 constitute a Ubiquitin-like 2 domain; it reads LDKVDILLTVDGVNFTNRFVPVGESFGKSLGNVFCDGVNVTKHKCDINYKGKVFFQ. One can recognise a Peptidase C16 2 domain in the interval 1631-1892; it reads SSFNFDQKEL…KIEYNPDLSQ (262 aa). Residue C1671 is the For PL2-PRO activity of the active site. Residues C1749, C1751, C1783, and C1785 each coordinate Zn(2+). Residues 1749-1785 form a C4-type 2 zinc finger; sequence CKCGVKQEQRTGVDAVMHFGTLSREDLEIGYTVDCSC. Active-site for PL2-PRO activity residues include H1828 and D1842. Residues 1906 to 2007 enclose the Nucleic acid-binding domain; that stretch reads IKAQFKTFEK…TYFNRPLLVD (102 aa). The region spanning 2020–2169 is the G2M domain; the sequence is DDGGDISESD…ADNKVIYTTE (150 aa). Helical transmembrane passes span 2138 to 2158, 2199 to 2219, and 2227 to 2247; these read ISAC…WIKI, ACII…NVIF, and IGFL…TFSL. The segment at 2138-2385 is HD1; sequence ISACFNFIKW…ASFIKLFILF (248 aa). Residues 2235 to 2296 form the 3Ecto domain; that stretch reads GKIAQWIKST…AIDVVQYEAD (62 aa). Intrachain disulfides connect C2251/C2275 and C2266/C2272. A run of 3 helical transmembrane segments spans residues 2313–2333, 2343–2363, and 2365–2385; these read LIVS…LISI, LFML…ANML, and AHVF…FILF. The segment at 2383 to 2473 is Y1; sequence ILFRHVAYGC…ELKRPIQPTD (91 aa). Residues 2383-2750 enclose the CoV Nsp3 Y domain; sequence ILFRHVAYGC…LTTPFSLKGG (368 aa). H2387, C2392, C2397, C2400, C2433, H2436, C2440, and C2443 together coordinate Zn(2+). Residues 2387-2400 are ZF1; it reads HVAYGCSKPGCLFC. Residues 2433–2443 are ZF2; sequence CSKHQWNCIDC. A Y2 region spans residues 2474–2566; sequence VAYHTVTDVK…MVDKNLITTA (93 aa). Residues 2474 to 2750 form a coV-Y region; that stretch reads VAYHTVTDVK…LTTPFSLKGG (277 aa). A Y3 region spans residues 2567-2649; the sequence is NTGTSVTETM…DSVMSAVSAG (83 aa). A Y4 region spans residues 2650 to 2750; sequence LELTDESCNN…LTTPFSLKGG (101 aa). The next 7 membrane-spanning stretches (helical) occupy residues 2752–2772, 2824–2844, 3009–3029, 3031–3051, 3063–3083, 3090–3110, and 3115–3135; these read VFSY…IGLW, STFG…VAVV, VFDL…FLAL, ASSI…YYLI, IVFV…VFQV, VYAI…SVIM, and LVMY…SVVV. The HD2 stretch occupies residues 2752 to 3135; that stretch reads VFSYFVYVCF…FCLLYISVVV (384 aa). Positions 3149 to 3246 constitute a Nsp4C domain; that stretch reads LGTSVRSDGT…TASVSTSFLQ (98 aa). Positions 3247–3549 constitute a Peptidase C30 domain; that stretch reads SGIVKMVNPT…YQQLAGIKLQ (303 aa). Active-site for 3CL-PRO activity residues include H3287 and C3391. 7 helical membrane passes run 3558–3578, 3588–3608, 3614–3634, 3657–3677, 3684–3704, 3711–3731, and 3755–3775; these read GIVC…TAFV, TNML…MLLV, YLTM…YLVV, TYTD…FVTL, LFSF…WYMG, ILLM…LSMA, and IVLV…GLFS. The tract at residues 3558-3775 is HD3; the sequence is GIVCWIMAST…IISCYWGLFS (218 aa). The RdRp Nsp7 cofactor domain occupies 3837 to 3925; it reads SKLTDVKCAN…DYAKDNTVLQ (89 aa). The RdRp Nsp8 cofactor domain occupies 3926 to 4122; that stretch reads ALQSEFVNMA…HNEVSATVLQ (197 aa). The Nsp9 ssRNA-binding domain occupies 4123-4232; sequence NNELMPAKLK…GTISSTVRLQ (110 aa). The region spanning 4233 to 4370 is the ExoN/MTase coactivator domain; it reads AGTATEYASN…CVSTDTTVQS (138 aa). C4306, C4309, H4315, C4322, C4348, C4351, C4359, and C4361 together coordinate Zn(2+). 2 zinc fingers span residues 4306-4322 and 4348-4361; these read CIYC…DGLC and CQVC…SCSC. Positions 4375–4630 constitute a NiRAN domain; that stretch reads FLNRVRGTSV…DCELYVNNAY (256 aa). 2 residues coordinate Mn(2+): N4578 and D4587. Positions 4631 to 4729 constitute a Nsp12 Interface domain; the sequence is RLFDLVQYDF…MNMDVDTHRY (99 aa). Positions 4660, 4666, 4671, 4675, and 4852 each coordinate Zn(2+). One can recognise a Nsp12 RNA-dependent RNA polymerase domain in the interval 4730–5297; it reads RLSLKDLLLY…NMYLRSAVMQ (568 aa). The tract at residues 4732 to 4946 is rdRp Fingers N-ter; the sequence is SLKDLLLYAA…HQKCLKSIAA (215 aa). The tract at residues 4947 to 4985 is rdRp Palm N-ter; it reads TRGVPVVIGTTKFYGGWDDMLRRLIKDVDNPVLMGWDYP. The 163-residue stretch at 4977–5139 folds into the RdRp catalytic domain; the sequence is PVLMGWDYPK…CYNSDYASKG (163 aa). Residues 4986–5044 form a rdRp Fingers C-ter region; that stretch reads KCDRAMPNILRIVSSLVLARKHEACCSQSDRFYRLANECAQVLSEIVMCGGCYYVKPGG. Zn(2+) is bound by residues H5007, C5010, and C5011. The segment at 5045 to 5180 is rdRp Palm C-ter; the sequence is TSSGDATTAF…NNGPHEFCSQ (136 aa). Active-site residues include S5124, D5125, and D5126. The interval 5181–5297 is rdRp Thumb; that stretch reads HTMLVKMDGD…NMYLRSAVMQ (117 aa). The 113-residue stretch at 5298–5410 folds into the CV ZBD domain; the sequence is SVGACVVCSS…DDFNRIASCK (113 aa). Residues C5302, C5305, C5313, C5316, C5323, C5326, H5330, H5336, C5347, C5352, C5369, and H5372 each coordinate Zn(2+). One can recognise a (+)RNA virus helicase ATP-binding domain in the interval 5553-5734; the sequence is SVLETFQNNV…MCCLGPDIFL (182 aa). ATP is bound at residue 5578 to 5585; sequence GPPGTGKS. The (+)RNA virus helicase C-terminal domain maps to 5735-5904; it reads GTCYRCPKEI…VETRVQCSTN (170 aa). One can recognise an ExoN domain in the interval 5971–6186; it reads LFITKEEAVK…RCLAVYDCFC (216 aa). Residues D5989, E5991, and E6090 contribute to the active site. C6106, C6109, C6125, H6128, H6156, C6160, and H6163 together coordinate Zn(2+). Residues H6167 and D6172 contribute to the active site. Residue C6178 coordinates Zn(2+). One can recognise an N7-MTase domain in the interval 6195-6421; the sequence is YPIISNELSI…NLWNTFTKLQ (227 aa). 6230–6236 is a binding site for S-adenosyl-L-methionine; the sequence is DIGNPKA. Residues 6308–6322 form a gpppA-binding region; sequence CNGGSLYVNKHAFHT. Residues C6346, C6367, C6378, and H6381 each contribute to the Zn(2+) site. The Nsp15 N-terminal oligomerization domain maps to 6422 to 6482; the sequence is SLENVVYNLV…NVAVELFAKR (61 aa). The region spanning 6483-6603 is the AV-Nsp11N/CoV-Nsp15M domain; it reads SIRHHPELKL…FAVRKEGQDV (121 aa). One can recognise a NendoU domain in the interval 6653–6792; it reads TCRTDMEKDF…NDEKVMTFYP (140 aa). Catalysis depends on residues H6683, H6698, K6738, K6841, D6925, K6965, and E6998. One can recognise a Nidovirus-type SAM-dependent 2'-O-MTase domain in the interval 6797-7091; it reads ASDWKPGYSM…KEVFVGDSLV (295 aa).

The protein belongs to the coronaviruses polyprotein 1ab family. As to quaternary structure, interacts with host PHB and PHB2. In terms of assembly, interacts with papain-like protease nsp3 and non-structural protein 6. Monomer. Homodimer. Only the homodimer shows catalytic activity. As to quaternary structure, interacts with nsp8 and nsp12 to form the replication-transcription complex (RTC): nsp12, nsp7, two subunits of nsp8, and up to two subunits of nsp13. In terms of assembly, interacts with nsp7, nsp13 and nsp12 to form the replication-transcription complex (RTC): nsp12, nsp7, two subunits of nsp8, and up to two subunits of nsp13. Interacts with nsp12. As to quaternary structure, interacts with proofreading exoribonuclease nsp14 and 2'-O-methyltransferase nsp16; these interactions enhance nsp14 and nsp16 enzymatic activities. In terms of assembly, interacts with nsp7 and nsp8 to form the replication-transcription complex (RTC): nsp12, nsp7, two subunits of nsp8, and up to two subunits of nsp13. Interacts with nsp9. Interacts with nsp8 to form the replication-transcription complex (RTC): nsp12, nsp7, two subunits of nsp8, and up to two subunits of nsp13. Mn(2+) is required as a cofactor. Requires Mg(2+) as cofactor. Specific enzymatic cleavages in vivo by its own proteases yield mature proteins. 3CL-PRO and PL-PRO proteinases are autocatalytically processed.

Its subcellular location is the host membrane. The protein localises to the host cytoplasm. It is found in the host perinuclear region. It localises to the host endoplasmic reticulum-Golgi intermediate compartment. It catalyses the reaction RNA(n) + a ribonucleoside 5'-triphosphate = RNA(n+1) + diphosphate. The enzyme catalyses ATP + H2O = ADP + phosphate + H(+). The catalysed reaction is Thiol-dependent hydrolysis of ester, thioester, amide, peptide and isopeptide bonds formed by the C-terminal Gly of ubiquitin (a 76-residue protein attached to proteins as an intracellular targeting signal).. It carries out the reaction a 5'-end (N(7)-methyl 5'-triphosphoguanosine)-ribonucleoside in mRNA + S-adenosyl-L-methionine = a 5'-end (N(7)-methyl 5'-triphosphoguanosine)-(2'-O-methyl-ribonucleoside) in mRNA + S-adenosyl-L-homocysteine + H(+). It catalyses the reaction uridylyl-uridylyl-ribonucleotide-RNA = a 3'-end uridylyl-2',3'-cyclophospho-uridine-RNA + a 5'-end dephospho-ribonucleoside-RNA. The enzyme catalyses a 5'-end diphospho-ribonucleoside in mRNA + GTP + H(+) = a 5'-end (5'-triphosphoguanosine)-ribonucleoside in mRNA + diphosphate. The catalysed reaction is a 5'-end (5'-triphosphoguanosine)-ribonucleoside in mRNA + S-adenosyl-L-methionine = a 5'-end (N(7)-methyl 5'-triphosphoguanosine)-ribonucleoside in mRNA + S-adenosyl-L-homocysteine. The replicase polyprotein of coronaviruses is a multifunctional protein: it contains the activities necessary for the transcription of negative stranded RNA, leader RNA, subgenomic mRNAs and progeny virion RNA as well as proteinases responsible for the cleavage of the polyprotein into functional products. Its function is as follows. Inhibits host translation by interacting with the 40S ribosomal subunit. The nsp1-40S ribosome complex further induces an endonucleolytic cleavage near the 5'UTR of host mRNAs, targeting them for degradation. Viral mRNAs are not susceptible to nsp1-mediated endonucleolytic RNA cleavage thanks to the presence of a 5'-end leader sequence and are therefore protected from degradation. By suppressing host gene expression, nsp1 facilitates efficient viral gene expression in infected cells and evasion from host immune response. Functionally, may play a role in the modulation of host cell survival signaling pathway by interacting with host PHB and PHB2. Indeed, these two proteins play a role in maintaining the functional integrity of the mitochondria and protecting cells from various stresses. In terms of biological role, responsible for the cleavages located at the N-terminus of the replicase polyprotein. In addition, PL-PRO possesses a deubiquitinating/deISGylating activity and processes both 'Lys-48'- and 'Lys-63'-linked polyubiquitin chains from cellular substrates. Participates together with nsp4 in the assembly of virally-induced cytoplasmic double-membrane vesicles necessary for viral replication. Antagonizes innate immune induction of type I interferon by blocking the phosphorylation, dimerization and subsequent nuclear translocation of host IRF3. Also prevents host NF-kappa-B signaling. Participates in the assembly of virally-induced cytoplasmic double-membrane vesicles necessary for viral replication. Its function is as follows. Cleaves the C-terminus of replicase polyprotein at 11 sites. Recognizes substrates containing the core sequence [ILMVF]-Q-|-[SGACN]. Also able to bind an ADP-ribose-1''-phosphate (ADRP). Functionally, plays a role in the initial induction of autophagosomes from host endoplasmic reticulum. Later, limits the expansion of these phagosomes that are no longer able to deliver viral components to lysosomes. In terms of biological role, forms a hexadecamer with nsp8 (8 subunits of each) that may participate in viral replication by acting as a primase. Alternatively, may synthesize substantially longer products than oligonucleotide primers. Forms a hexadecamer with nsp7 (8 subunits of each) that may participate in viral replication by acting as a primase. Alternatively, may synthesize substantially longer products than oligonucleotide primers. Its function is as follows. Forms a primer, NSP9-pU, which is utilized by the polymerase for the initiation of RNA chains. Interacts with ribosome signal recognition particle RNA (SRP). Together with NSP8, suppress protein integration into the cell membrane, thereby disrupting host immune defenses. Functionally, plays a pivotal role in viral transcription by stimulating both nsp14 3'-5' exoribonuclease and nsp16 2'-O-methyltransferase activities. Therefore plays an essential role in viral mRNAs cap methylation. In terms of biological role, RNA-directed RNA polymerase that catalyzes the transcription of viral genomic and subgenomic RNAs. Acts in complex with nsp7 and nsp8 to transcribe both the minus and positive strands of genomic RNA. The kinase-like NiRAN domain of NSP12 attaches one or more nucleotides to the amino terminus of NSP9, forming a covalent RNA-protein intermediate that serves as transcription/replication primer. Subgenomic RNAs (sgRNAs) are formed by discontinuous transcription: The polymerase has the ability to pause at transcription-regulating sequences (TRS) and jump to the leader TRS, resulting in a major deletion. This creates a series of subgenomic RNAs that are replicated, transcribed and translated. In addition, Nsp12 is a subunit of the viral RNA capping enzyme that catalyzes the RNA guanylyltransferase reaction for genomic and sub-genomic RNAs. Subsequently, the NiRAN domain transfers RNA to GDP, and forms the core cap structure GpppA-RNA. Multi-functional protein with a zinc-binding domain in N-terminus displaying RNA and DNA duplex-unwinding activities with 5' to 3' polarity. Activity of helicase is dependent on magnesium. Its function is as follows. Plays a role in viral RNA synthesis through two distinct activities. The N7-guanine methyltransferase activity plays a role in the formation of the cap structure GpppA-RNA. The proofreading exoribonuclease reduces the sensitivity of the virus to RNA mutagens during replication. This activity acts on both ssRNA and dsRNA in a 3'-5' direction. Functionally, plays a role in viral transcription/replication and prevents the simultaneous activation of host cell dsRNA sensors, such as MDA5/IFIH1, OAS, and PKR. Acts by degrading the 5'-polyuridines generated during replication of the poly(A) region of viral genomic and subgenomic RNAs. Catalyzes a two-step reaction in which a 2'3'-cyclic phosphate (2'3'-cP) is first generated by 2'-O transesterification, which is then hydrolyzed to a 3'-phosphate (3'-P). If not degraded, poly(U) RNA would hybridize with poly(A) RNA tails and activate host dsRNA sensors. In terms of biological role, methyltransferase that mediates mRNA cap 2'-O-ribose methylation to the 5'-cap structure of viral mRNAs. N7-methyl guanosine cap is a prerequisite for binding of nsp16. Therefore plays an essential role in viral mRNAs cap methylation which is essential to evade immune system. The chain is Replicase polyprotein 1ab (rep) from Bos taurus (Bovine).